The sequence spans 1167 residues: Integrin alpha-E (1167 aa).

The signal sequence occupies residues 1 to 19 (MKWLFHTLLCMASLKPQGA). The Extracellular portion of the chain corresponds to 20–1114 (FNLDVDWAWV…IFLKEEETRS (1095 aa)). FG-GAP repeat units follow at residues 27–81 (AWVT…PDEI) and 84–142 (QPVE…LQAQ). Asn51 is a glycosylation site (N-linked (GlcNAc...) asparagine). 2 disulfide bridges follow: Cys72–Cys83 and Cys130–Cys164. An X-domain (extra domain) region spans residues 149–192 (EGFLDPGAHVDSGDYCRSKGGSTGEEKKSARRRRTVEEEDEEED). The interval 163 to 191 (YCRSKGGSTGEEKKSARRRRTVEEEDEEE) is disordered. Residues 193-382 (GTEIAIVLDG…SKLQQHIVHM (190 aa)) form the VWFA domain. Residues Asn256, Asn314, Asn341, Asn364, Asn418, and Asn437 are each glycosylated (N-linked (GlcNAc...) asparagine). The FG-GAP 3 repeat unit spans residues 383 to 435 (EGTVGDALQYQLAQTGFSAQILDKGQVLLGTVGAFNWSGGALLYSTQNGRGCF). 4 FG-GAP repeats span residues 438–491 (QTAK…REED), 492–552 (AFVR…DASF), 555–619 (AHTL…GLYD), and 623–683 (QQIR…FTPD). Ca(2+) contacts are provided by Asp514, Asp516, Asp518, Asp522, Asp578, Asn580, Asp582, Asp586, Asp646, Asn648, Asp650, and Asp654. Cys698 and Cys754 are joined by a disulfide. 2 N-linked (GlcNAc...) asparagine glycosylation sites follow: Asn718 and Asn773. An intrachain disulfide couples Cys814 to Cys820. N-linked (GlcNAc...) asparagine glycosylation is found at Asn829 and Asn846. A disulfide bridge connects residues Cys884 and Cys898. N-linked (GlcNAc...) asparagine glycosylation is found at Asn911, Asn925, Asn968, and Asn1013. Disulfide bonds link Cys998–Cys1023 and Cys1031–Cys1047. Residues Asn1055 and Asn1086 are each glycosylated (N-linked (GlcNAc...) asparagine). The helical transmembrane segment at 1115-1137 (LPLIIGSSIGGLLVLVVIIAILF) threads the bilayer. Residues 1138 to 1167 (KCGFFKRKYQQLNLESTRRAQLKADSLLQD) are Cytoplasmic-facing. Positions 1140-1144 (GFFKR) match the GFFKR motif motif.

It belongs to the integrin alpha chain family. In terms of assembly, heterodimer of an alpha and a beta subunit. The alpha subunit is composed of a heavy and a light chains linked by a disulfide bond. Alpha-E associates with beta-7.

The protein resides in the membrane. In terms of biological role, integrin alpha-E/beta-7 is a receptor for E-cadherin. It mediates adhesion of intra-epithelial T-lymphocytes to epithelial cell monolayers. Mice expressing a null mutation of the alpha-E subunit gene exhibit a marked reduction in the numbers of intraepithelial lymphocytes in the gut and in the development of gut-associated lymphoid aggregates, supporting a specific role for this integrin in mediating retention of lymphocytes in the intestinal wall. The polypeptide is Integrin alpha-E (Itgae) (Mus musculus (Mouse)).